Consider the following 329-residue polypeptide: Vomeronasal type-1 receptor 42 (329 aa).

Residues 1 to 32 (MGDILFSSPQSMFSHTMNKNSILHTHSIIGKT) are Extracellular-facing. The helical transmembrane segment at 33–53 (FFSEIGIGISGNSFLLLVHIL) threads the bilayer. The Cytoplasmic segment spans residues 54 to 65 (KFIRGHRPRLTD). The helical transmembrane segment at 66-86 (LPIGLLSLIHLLMLLVAAFIA) threads the bilayer. The Extracellular segment spans residues 87–109 (TDIFISRRGWDDIICKFLVYLYR). C101 and C188 are disulfide-bonded. The helical transmembrane segment at 110-130 (VLRGFSLCTTSMLSILQAIIL) threads the bilayer. Over 131–150 (SPRSSCLAKFKHISPHHISG) the chain is Cytoplasmic. A helical transmembrane segment spans residues 151–171 (AILFLSVLYMLIGSQLLVSII). Over 172–209 (ATPNLTMNDFIYVTQSCSILPLSYLMQSIYSTLLAIRE) the chain is Extracellular. A glycan (N-linked (GlcNAc...) asparagine) is linked at N175. The helical transmembrane segment at 210–230 (FFLISLMVLSNWYMVALLSMH) threads the bilayer. Residues 231–254 (RKQTQHLHGTNLSPKKSPEQSATQ) lie on the Cytoplasmic side of the membrane. A helical transmembrane segment spans residues 255–275 (TILMLISFFLLMTIYDTIVSC). Over 276–285 (SRTMFLNDPT) the chain is Extracellular. The helical transmembrane segment at 286–306 (SYSIELFIMHIYATVSPFVFM) threads the bilayer. Topologically, residues 307–329 (STEKHIVNFLRSLGKRVINFNLH) are cytoplasmic.

The protein belongs to the G-protein coupled receptor 1 family.

Its subcellular location is the cell membrane. Its function is as follows. Putative pheromone receptor implicated in the regulation of social and reproductive behavior. This Mus musculus (Mouse) protein is Vomeronasal type-1 receptor 42 (Vmn1r42).